The chain runs to 213 residues: Large ribosomal subunit protein uL1 (213 aa).

It belongs to the universal ribosomal protein uL1 family. In terms of assembly, part of the 50S ribosomal subunit.

Functionally, binds directly to 23S rRNA. Probably involved in E site tRNA release. Protein L1 is also a translational repressor protein, it controls the translation of its operon by binding to its mRNA. In Methanosarcina mazei (strain ATCC BAA-159 / DSM 3647 / Goe1 / Go1 / JCM 11833 / OCM 88) (Methanosarcina frisia), this protein is Large ribosomal subunit protein uL1.